The following is a 506-amino-acid chain: tRNA (guanine(6)-N(2))-methyltransferase THUMP3 (506 aa).

A disordered region spans residues 144–172; that stretch reads KTKRRKLNPNSSKQKIDNGRGDTTVEKDV. Residues 157-172 show a composition bias toward basic and acidic residues; that stretch reads QKIDNGRGDTTVEKDV. The region spanning 170–286 is the THUMP domain; sequence KDVKKELTNS…DNEVVVGIAL (117 aa).

The protein belongs to the methyltransferase superfamily. As to quaternary structure, part of the heterodimeric THUMPD3-TRM112 methyltransferase complex; this complex forms an active tRNA methyltransferase, where TRMT112 acts as an activator of the catalytic subunit THUMPD3.

The protein localises to the cytoplasm. The enzyme catalyses guanosine(6) in tRNA + S-adenosyl-L-methionine = N(2)-methylguanosine(6) in tRNA + S-adenosyl-L-homocysteine + H(+). It catalyses the reaction guanosine(7) in tRNA + S-adenosyl-L-methionine = N(2)-methylguanosine(7) in tRNA + S-adenosyl-L-homocysteine + H(+). In terms of biological role, catalytic subunit of the THUMPD3-TRM112 methyltransferase complex, that specifically mediates the S-adenosyl-L-methionine-dependent N(2)-methylation of guanosine nucleotide at position 6 (m2G6) in tRNAs. This is one of the major tRNA (guanine-N(2))-methyltransferases. Also catalyzes the S-adenosyl-L-methionine-dependent N(2)-methylation of guanosine nucleotide at position 7 of tRNA(Trp). This chain is tRNA (guanine(6)-N(2))-methyltransferase THUMP3, found in Bos taurus (Bovine).